A 665-amino-acid polypeptide reads, in one-letter code: Lamin-A (665 aa).

At Met1 the chain carries N-acetylmethionine. The tract at residues Met1–Glu29 is head. Ser18 is modified (phosphoserine). The region spanning Glu27 to Leu383 is the IF rod domain. The interval Asp30 to Ile66 is coil 1A. The segment at Ser67–Ala76 is linker 1. A coil 1B region spans residues Tyr77–Thr214. Residues Lys215 to Ala238 form a linker 2 region. The interval Asp239–Leu383 is coil 2. Disordered regions lie at residues Glu381–Glu441, Asp550–Asn581, and Ala602–Ser641. The tail stretch occupies residues Arg384 to Ile664. Ser388 bears the Phosphoserine mark. Positions Ile399–Ala411 are enriched in low complexity. A Nuclear localization signal motif is present at residues Lys413 to Glu418. The LTD domain maps to Ser425–Arg542. The segment covering Phe427–Lys436 has biased composition (polar residues). Residues Gly605–Gly630 show a composition bias toward low complexity. Cys662 is modified (cysteine methyl ester). Residue Cys662 is the site of S-farnesyl cysteine attachment. A propeptide spans Ser663–Met665 (removed in mature form).

The protein belongs to the intermediate filament family. In terms of assembly, homodimer. Lamin dimers then assemble into dimeric head-to-tail polymers. Ultimately, two head-to-tail polymers assemble laterally into a protofilament with a uniformly shaped rod of 3.5 nm in diameter. In terms of processing, phosphorylation plays a key role in lamin organization, subcellular localization and nuclear envelope disintegration. Phosphorylation by CDK1 at Ser-18 at the onset of mitosis drives lamin disassembly and nuclear envelope breakdown.

The protein localises to the nucleus lamina. It localises to the nucleus envelope. The protein resides in the nucleus. It is found in the nucleoplasm. Its subcellular location is the nucleus matrix. Lamins are intermediate filament proteins that assemble into a filamentous meshwork, and which constitute the major components of the nuclear lamina, a fibrous layer on the nucleoplasmic side of the inner nuclear membrane. Lamins provide a framework for the nuclear envelope, bridging the nuclear envelope and chromatin, thereby playing an important role in nuclear assembly, chromatin organization, nuclear membrane and telomere dynamics. The structural integrity of the lamina is strictly controlled by the cell cycle, as seen by the disintegration and formation of the nuclear envelope in prophase and telophase, respectively. This chain is Lamin-A (lmna), found in Xenopus laevis (African clawed frog).